A 1108-amino-acid chain; its full sequence is Topless-related protein 3 (1108 aa).

Residues 4 to 36 form the LisH domain; that stretch reads LSRELVFLILQFLEEEKFKESVHRLEKESGFFF. Positions 34–92 constitute a CTLH domain; sequence FFFNTKYFDEKVLAGEWDDVETYLSGFTKVDDNRYSMKIFFEIRKQKYLEALDRQEKAK. Phosphoserine is present on S214. 6 WD repeats span residues 343–383, 405–444, 450–491, 493–534, 583–623, and 628–667; these read HQGS…RLVS, ETPI…DLRQ, AHVG…HFTF, GHDA…SRVD, EFQK…VLTS, and GGLP…RSLR. The segment at 706–725 is disordered; it reads HSQMLNGVDPSKSRIDDSTD. Positions 716 to 725 are enriched in basic and acidic residues; it reads SKSRIDDSTD. WD repeat units lie at residues 751–790, 818–856, 859–899, 902–941, and 994–1033; these read GSST…QNPS, NLEN…VMTT, PPPP…VKSK, GHQK…KRKS, and SLSA…LRCR. The tract at residues 1084 to 1108 is disordered; it reads GMIPPSEAINSPSTTSNQTPEQLQR. A compositionally biased stretch (polar residues) spans 1091 to 1108; the sequence is AINSPSTTSNQTPEQLQR.

Tetramer. Interacts with NINJA/AFPH2. Interacts with SMXL6. Interacts with SPL (via EAR motif). Interacts with SPEAR3/TIE1.

It is found in the nucleus. Its function is as follows. Transcriptional corepressor. Negative regulator of jasmonate responses. This chain is Topless-related protein 3 (TPR3), found in Arabidopsis thaliana (Mouse-ear cress).